Reading from the N-terminus, the 802-residue chain is Oligophrenin-1 (802 aa).

The PH domain occupies 265 to 368; sequence QPTIEGYLYT…WMEAMDGKEP (104 aa). The region spanning 380 to 564 is the Rho-GAP domain; sequence MELNEVGFKF…ILIEHFGKIY (185 aa). Disordered regions lie at residues 569–589, 607–770, and 783–802; these read EESA…HKPI, LDES…NAGE, and FETA…GDES. Residues 616 to 627 are compositionally biased toward polar residues; the sequence is HQTPNGTITSSI. Basic and acidic residues predominate over residues 716-732; the sequence is HHKEGDADSFSKVRPPG.

In terms of assembly, interacts with HOMER1. Interacts with AMPA receptor complexes. Interacts with SH3GL2 (endophilin-A1). Interacts (via C-terminus) with NR1D1.

Its subcellular location is the postsynapse. The protein localises to the presynapse. It localises to the cell projection. It is found in the axon. The protein resides in the dendritic spine. Its subcellular location is the dendrite. The protein localises to the cytoplasm. Stimulates GTP hydrolysis of members of the Rho family. Its action on RHOA activity and signaling is implicated in growth and stabilization of dendritic spines, and therefore in synaptic function. Critical for the stabilization of AMPA receptors at postsynaptic sites. Critical for the regulation of synaptic vesicle endocytosis at pre-synaptic terminals. Required for the localization of NR1D1 to dendrites, can suppress its repressor activity and protect it from proteasomal degradation. This Pan troglodytes (Chimpanzee) protein is Oligophrenin-1 (OPHN1).